The chain runs to 190 residues: GATA transcription factor 17 (190 aa).

The span at 1 to 14 (MSEGSEDTKTKLDS) shows a compositional bias: basic and acidic residues. Disordered regions lie at residues 1-42 (MSEG…DTKR) and 77-101 (RQAALGMRSEEKKKNRKSNCNNDLN). The segment at 38-92 (GDTKRTCVDCGTIRTPLWRGGPAGPKSLCNACGIKSRKKRQAALGMRSEEKKKNR) adopts a GATA-type zinc-finger fold.

The protein belongs to the type IV zinc-finger family. Class B subfamily.

It is found in the nucleus. Transcriptional regulator that specifically binds 5'-GATA-3' or 5'-GAT-3' motifs within gene promoters. The chain is GATA transcription factor 17 (GATA17) from Arabidopsis thaliana (Mouse-ear cress).